The sequence spans 347 residues: MKKRIAIVLFNLGGPNSLELVKPFLFNLFYDKAIINLPNPLRYIIAKIISIIRERKSQKIYSLIGGKSSLLQETQEQRLLLTKKLKQLIKEDFAVFINMRYSAPFVKETINQIKKYNPSEIILLPLYPQFSSTTTGSSVKNFLQNLDIPIKTLDIPIKTVCCYPLEEDFIKAHVSLIKEKLYDKNFCILFSAHGLPEKIIKAGDPYSFQIKETVKAIVKELNIKDLDYKITYQSRVGPIEWLKPNTEDEIELAGKLKKDVIIVPISFVSEHVETLVELDIEYKLIADKYEIQYTRIPTLGTNKIFINSLTNILLRFINKVDTNLVTSSSSTRICPNEFTKCLCKLKN.

Fe cation-binding residues include His-193 and Glu-273.

Belongs to the ferrochelatase family.

It is found in the cytoplasm. The catalysed reaction is heme b + 2 H(+) = protoporphyrin IX + Fe(2+). Its pathway is porphyrin-containing compound metabolism; protoheme biosynthesis; protoheme from protoporphyrin-IX: step 1/1. In terms of biological role, catalyzes the ferrous insertion into protoporphyrin IX. The polypeptide is Ferrochelatase (Rickettsia canadensis (strain McKiel)).